A 449-amino-acid chain; its full sequence is MGRSRHHNKLKEGIFEAEITALSHDGRGIAKVDGKTTFIPFTLPGEVVKFEYTFTKAKFDEAKVVEYVKKSSNRVNPPCEHFQICGGCSLQHMSTDAQIEHKQQTLINQLKYIGNGVEPENILPPLRTSNTEGYRNKARLGVRYVSKKGKILVGFRERNGRFLADIDKCIVLNPLVGDKITEISSFIETLSIYQHIAQLEIAIDDTRPAMIVRHLEPFTNEDLEKLRSFAQQNNYWIYLQSKGPDTIFRLYPQGDVEPKKLSYQPAAGIDIGFEPNDFTQVNNDINKKMIKRAIELLDISENDSIIDLFCGLGNFTLPISQHAKTVIGVEGEPTMVKRAKETADNNNITNVNFYAANLFESFEDKEWFNNFEYNKMLLDPPRAGAQEVCNNIEKFNVKRIVYVSCDTATLARDAGILVNNKDYKLISAGVMDMFPHTMHVESIAVFEKI.

Residues 1–66 (MGRSRHHNKL…AKFDEAKVVE (66 aa)) form the TRAM domain. [4Fe-4S] cluster is bound by residues Cys79, Cys85, Cys88, and Cys169. S-adenosyl-L-methionine is bound by residues Gln280, Phe309, Asn314, Glu330, Asn357, and Asp379. Cys405 serves as the catalytic Nucleophile.

This sequence belongs to the class I-like SAM-binding methyltransferase superfamily. RNA M5U methyltransferase family. RlmD subfamily.

It carries out the reaction uridine(1939) in 23S rRNA + S-adenosyl-L-methionine = 5-methyluridine(1939) in 23S rRNA + S-adenosyl-L-homocysteine + H(+). Catalyzes the formation of 5-methyl-uridine at position 1939 (m5U1939) in 23S rRNA. The chain is 23S rRNA (uracil(1939)-C(5))-methyltransferase RlmD from Francisella tularensis subsp. novicida (strain U112).